The sequence spans 313 residues: Homoserine kinase (313 aa).

ATP is bound at residue Pro92–Ala102.

This sequence belongs to the GHMP kinase family. Homoserine kinase subfamily.

The protein localises to the cytoplasm. It catalyses the reaction L-homoserine + ATP = O-phospho-L-homoserine + ADP + H(+). It participates in amino-acid biosynthesis; L-threonine biosynthesis; L-threonine from L-aspartate: step 4/5. Catalyzes the ATP-dependent phosphorylation of L-homoserine to L-homoserine phosphate. The polypeptide is Homoserine kinase (Aeropyrum pernix (strain ATCC 700893 / DSM 11879 / JCM 9820 / NBRC 100138 / K1)).